Here is a 138-residue protein sequence, read N- to C-terminus: Ribulose bisphosphate carboxylase small subunit (138 aa).

This sequence belongs to the RuBisCO small chain family. Heterohexadecamer of 8 large and 8 small subunits.

It localises to the plastid. It is found in the chloroplast. Its function is as follows. RuBisCO catalyzes two reactions: the carboxylation of D-ribulose 1,5-bisphosphate, the primary event in carbon dioxide fixation, as well as the oxidative fragmentation of the pentose substrate in the photorespiration process. Both reactions occur simultaneously and in competition at the same active site. Although the small subunit is not catalytic it is essential for maximal activity. This chain is Ribulose bisphosphate carboxylase small subunit, found in Pyropia katadae (Red alga).